Here is a 217-residue protein sequence, read N- to C-terminus: Probable GTP-binding protein EngB (217 aa).

The 175-residue stretch at 31–205 (VGVEIAFAGR…LAILDAWCHP (175 aa)) folds into the EngB-type G domain. GTP is bound by residues 39–46 (GRSNAGKS), 66–70 (GRTQL), 84–87 (DLPG), 151–154 (TKAD), and 184–186 (FSA). Mg(2+) contacts are provided by Ser-46 and Thr-68.

It belongs to the TRAFAC class TrmE-Era-EngA-EngB-Septin-like GTPase superfamily. EngB GTPase family. The cofactor is Mg(2+).

Functionally, necessary for normal cell division and for the maintenance of normal septation. The polypeptide is Probable GTP-binding protein EngB (Shewanella amazonensis (strain ATCC BAA-1098 / SB2B)).